Reading from the N-terminus, the 79-residue chain is Scutelatoxin (79 aa).

Residues M1–T21 form the signal peptide. Disulfide bonds link C24/C41, C34/C59, C63/C71, and C72/C77.

It belongs to the three-finger toxin family. Short-chain subfamily. In terms of tissue distribution, expressed by the venom gland.

It is found in the secreted. The polypeptide is Scutelatoxin (Oxyuranus scutellatus scutellatus (Australian taipan)).